Reading from the N-terminus, the 254-residue chain is Protein GVQW3 (254 aa).

The chain is Protein GVQW3 from Homo sapiens (Human).